A 491-amino-acid polypeptide reads, in one-letter code: Protein nucleotidyltransferase YdiU (491 aa).

Positions 94, 96, 97, 117, 129, 130, 180, and 187 each coordinate ATP. Asp256 (proton acceptor) is an active-site residue. Mg(2+)-binding residues include Asn257 and Asp266. Asp266 serves as a coordination point for ATP.

Belongs to the SELO family. Mg(2+) serves as cofactor. The cofactor is Mn(2+).

It carries out the reaction L-seryl-[protein] + ATP = 3-O-(5'-adenylyl)-L-seryl-[protein] + diphosphate. The enzyme catalyses L-threonyl-[protein] + ATP = 3-O-(5'-adenylyl)-L-threonyl-[protein] + diphosphate. The catalysed reaction is L-tyrosyl-[protein] + ATP = O-(5'-adenylyl)-L-tyrosyl-[protein] + diphosphate. It catalyses the reaction L-histidyl-[protein] + UTP = N(tele)-(5'-uridylyl)-L-histidyl-[protein] + diphosphate. It carries out the reaction L-seryl-[protein] + UTP = O-(5'-uridylyl)-L-seryl-[protein] + diphosphate. The enzyme catalyses L-tyrosyl-[protein] + UTP = O-(5'-uridylyl)-L-tyrosyl-[protein] + diphosphate. Nucleotidyltransferase involved in the post-translational modification of proteins. It can catalyze the addition of adenosine monophosphate (AMP) or uridine monophosphate (UMP) to a protein, resulting in modifications known as AMPylation and UMPylation. This chain is Protein nucleotidyltransferase YdiU, found in Clostridium botulinum (strain Loch Maree / Type A3).